Reading from the N-terminus, the 355-residue chain is 3-dehydroquinate synthase (355 aa).

NAD(+) contacts are provided by residues 71-76 (EGEERK), 105-109 (GVVGD), 129-130 (TS), Lys-142, and Lys-151. The Zn(2+) site is built by Glu-184, His-246, and His-263.

It belongs to the sugar phosphate cyclases superfamily. Dehydroquinate synthase family. Requires Co(2+) as cofactor. Zn(2+) serves as cofactor. NAD(+) is required as a cofactor.

Its subcellular location is the cytoplasm. The enzyme catalyses 7-phospho-2-dehydro-3-deoxy-D-arabino-heptonate = 3-dehydroquinate + phosphate. It functions in the pathway metabolic intermediate biosynthesis; chorismate biosynthesis; chorismate from D-erythrose 4-phosphate and phosphoenolpyruvate: step 2/7. In terms of biological role, catalyzes the conversion of 3-deoxy-D-arabino-heptulosonate 7-phosphate (DAHP) to dehydroquinate (DHQ). The sequence is that of 3-dehydroquinate synthase from Streptococcus pneumoniae serotype 19F (strain G54).